The sequence spans 334 residues: Heat shock factor 2-binding protein (334 aa).

Residues 14–51 (MGTKEEFVKVRKKDLERLTTEVMQIRDFLPRILNGEVL) are interaction with BRME1. The stretch at 49-122 (EVLESFQKLK…LLQQAEYCTE (74 aa)) forms a coiled coil. The tract at residues 83-334 (ARLETVQADN…EDLRTLEHNV (252 aa)) is interaction with BRCA2.

In terms of assembly, associates with HSF2. The interaction seems to occur between the trimerization domain of HSF2 and the N-terminal hydrophilic region of HSF2BP. Interacts (via C-terminus) with BNC1. Interacts (via N-terminus) with BRCA2 and BRME1; the interactions are direct and allow the formation of a ternary complex. The complex BRME1:HSF2BP:BRCA2 interacts with SPATA22, MEIOB and RAD51. In terms of processing, sumoylated by UBE2I in response to MEKK1-mediated stimuli. In terms of tissue distribution, testis specific. Overexpressed in some tumors.

It localises to the cytoplasm. The protein resides in the chromosome. In terms of biological role, meiotic recombination factor component of recombination bridges involved in meiotic double-strand break repair. Modulates the localization of recombinases DMC1:RAD51 to meiotic double-strand break (DSB) sites through the interaction with BRCA2 and its recruitment during meiotic recombination. Indispensable for the DSB repair, homologous synapsis, and crossover formation that are needed for progression past metaphase I, is essential for spermatogenesis and male fertility. Required for proper recombinase recruitment in female meiosis. Inhibits BNC1 transcriptional activity during spermatogenesis, probably by sequestering it in the cytoplasm. May be involved in modulating HSF2 activation in testis. The polypeptide is Heat shock factor 2-binding protein (Homo sapiens (Human)).